The sequence spans 179 residues: Dual-action ribosomal maturation protein DarP (179 aa).

It belongs to the DarP family.

Its subcellular location is the cytoplasm. In terms of biological role, member of a network of 50S ribosomal subunit biogenesis factors which assembles along the 30S-50S interface, preventing incorrect 23S rRNA structures from forming. Promotes peptidyl transferase center (PTC) maturation. This is Dual-action ribosomal maturation protein DarP from Aliivibrio fischeri (strain ATCC 700601 / ES114) (Vibrio fischeri).